Consider the following 495-residue polypeptide: Aspartyl/glutamyl-tRNA(Asn/Gln) amidotransferase subunit B (495 aa).

It belongs to the GatB/GatE family. GatB subfamily. Heterotrimer of A, B and C subunits.

It carries out the reaction L-glutamyl-tRNA(Gln) + L-glutamine + ATP + H2O = L-glutaminyl-tRNA(Gln) + L-glutamate + ADP + phosphate + H(+). The enzyme catalyses L-aspartyl-tRNA(Asn) + L-glutamine + ATP + H2O = L-asparaginyl-tRNA(Asn) + L-glutamate + ADP + phosphate + 2 H(+). In terms of biological role, allows the formation of correctly charged Asn-tRNA(Asn) or Gln-tRNA(Gln) through the transamidation of misacylated Asp-tRNA(Asn) or Glu-tRNA(Gln) in organisms which lack either or both of asparaginyl-tRNA or glutaminyl-tRNA synthetases. The reaction takes place in the presence of glutamine and ATP through an activated phospho-Asp-tRNA(Asn) or phospho-Glu-tRNA(Gln). The sequence is that of Aspartyl/glutamyl-tRNA(Asn/Gln) amidotransferase subunit B from Methanosarcina barkeri (strain Fusaro / DSM 804).